The following is a 441-amino-acid chain: tRNA modification GTPase MnmE (441 aa).

(6S)-5-formyl-5,6,7,8-tetrahydrofolate-binding residues include Arg-22, Glu-80, and Lys-118. In terms of domain architecture, TrmE-type G spans 213–366 (GIYIAIVGEP…LLNLIKQRVE (154 aa)). Residues 223-228 (NSGKST), 242-248 (SEYAGTT), and 267-270 (DTAG) each bind GTP. Mg(2+) is bound by residues Ser-227 and Thr-248. A (6S)-5-formyl-5,6,7,8-tetrahydrofolate-binding site is contributed by Lys-441.

It belongs to the TRAFAC class TrmE-Era-EngA-EngB-Septin-like GTPase superfamily. TrmE GTPase family. In terms of assembly, homodimer. Heterotetramer of two MnmE and two MnmG subunits. The cofactor is K(+).

The protein localises to the cytoplasm. Functionally, exhibits a very high intrinsic GTPase hydrolysis rate. Involved in the addition of a carboxymethylaminomethyl (cmnm) group at the wobble position (U34) of certain tRNAs, forming tRNA-cmnm(5)s(2)U34. The protein is tRNA modification GTPase MnmE of Ehrlichia canis (strain Jake).